The sequence spans 131 residues: Leptin receptor gene-related protein (131 aa).

4 helical membrane passes run 7-27 (LVAL…GCAL), 32-52 (VYWP…HFIA), 69-89 (LAYF…VILA), and 100-120 (GLVL…FLVF).

The protein belongs to the OB-RGRP/VPS55 family. In terms of assembly, interacts with LEPR. Interacts with RAB13.

The protein localises to the golgi apparatus membrane. It is found in the endosome membrane. Its function is as follows. Negatively regulates leptin receptor (LEPR) cell surface expression, and thus decreases response to leptin/LEP. Negatively regulates growth hormone (GH) receptor cell surface expression in liver. May play a role in liver resistance to GH during periods of reduced nutrient availability. This chain is Leptin receptor gene-related protein (LEPROT), found in Bos taurus (Bovine).